A 425-amino-acid chain; its full sequence is Gamma-glutamyl phosphate reductase (425 aa).

Belongs to the gamma-glutamyl phosphate reductase family.

It is found in the cytoplasm. It catalyses the reaction L-glutamate 5-semialdehyde + phosphate + NADP(+) = L-glutamyl 5-phosphate + NADPH + H(+). It functions in the pathway amino-acid biosynthesis; L-proline biosynthesis; L-glutamate 5-semialdehyde from L-glutamate: step 2/2. Catalyzes the NADPH-dependent reduction of L-glutamate 5-phosphate into L-glutamate 5-semialdehyde and phosphate. The product spontaneously undergoes cyclization to form 1-pyrroline-5-carboxylate. The protein is Gamma-glutamyl phosphate reductase of Xylella fastidiosa (strain M23).